The primary structure comprises 274 residues: MEALRQRIEAAFEARTDITPSTVDERVRSDVQHVINMLDKGELRVAEKIDGLWHVHQWLKKAVLLSFRIFDNAVIDGAETKYFDKVPLKFAEYDEARFKAEAIRVVPSATVRKGSFIGKNTVLMPSYVNLGAYVDEGTMVDTWATVGSCAQIGKNVHLSGGVGIGGVLEPLQAGPTIIEDNCFIGARSEIVEGVVVEEGSVISMGVYIGQSTRIYDRETGEVHYGRVPAGSVVVSGNLPSACGKYSLYAAIIVKKVDAKTRSKVGINELLRIVD.

Residues Arg-104 and Asp-141 each contribute to the substrate site.

It belongs to the transferase hexapeptide repeat family. Homotrimer.

The protein localises to the cytoplasm. The catalysed reaction is (S)-2,3,4,5-tetrahydrodipicolinate + succinyl-CoA + H2O = (S)-2-succinylamino-6-oxoheptanedioate + CoA. It functions in the pathway amino-acid biosynthesis; L-lysine biosynthesis via DAP pathway; LL-2,6-diaminopimelate from (S)-tetrahydrodipicolinate (succinylase route): step 1/3. In Shewanella oneidensis (strain ATCC 700550 / JCM 31522 / CIP 106686 / LMG 19005 / NCIMB 14063 / MR-1), this protein is 2,3,4,5-tetrahydropyridine-2,6-dicarboxylate N-succinyltransferase.